The following is a 670-amino-acid chain: Leiomodin-3 (670 aa).

Disordered stretches follow at residues 34-72 (EMDD…EEID), 94-120 (EIAP…GSFD), 139-165 (EEER…EDKV), and 202-274 (EDKV…NWVP). Basic and acidic residues-rich tracts occupy residues 40–63 (PDER…RDCT), 97–112 (PDER…DQTD), 153–163 (TNEEHEAKNED), 205–214 (VCDKPVKTDL), and 249–261 (TETK…KEDS). The stretch at 150–183 (SQKTNEEHEAKNEDKVEELELVYEEIVEEVEGGQ) forms a coiled coil. The stretch at 464–494 (DRQRQQRMEEQKLQQMKEQRKVMEMYEDSLN) forms a coiled coil. Residues 517–556 (NGAEDIPEDSPEPSPQPSPPHQLCKTQHLAPQQHPPNLST) are disordered. The WH2 domain occupies 637–656 (PRDHLLSEIRQSNVAYLKAV).

The protein belongs to the tropomodulin family. Expressed in muscle (at protein level).

The protein resides in the cytoplasm. Its subcellular location is the myofibril. It localises to the sarcomere. The protein localises to the a band. It is found in the m line. The protein resides in the cytoskeleton. In terms of biological role, essential for the organization of sarcomeric thin filaments in skeletal muscle. The polypeptide is Leiomodin-3 (Danio rerio (Zebrafish)).